The sequence spans 499 residues: Probable cytosol aminopeptidase (499 aa).

Residues lysine 263 and aspartate 268 each coordinate Mn(2+). Residue lysine 275 is part of the active site. Mn(2+) is bound by residues aspartate 286, aspartate 345, and glutamate 347. The active site involves arginine 349.

Belongs to the peptidase M17 family. It depends on Mn(2+) as a cofactor.

It is found in the cytoplasm. The enzyme catalyses Release of an N-terminal amino acid, Xaa-|-Yaa-, in which Xaa is preferably Leu, but may be other amino acids including Pro although not Arg or Lys, and Yaa may be Pro. Amino acid amides and methyl esters are also readily hydrolyzed, but rates on arylamides are exceedingly low.. It carries out the reaction Release of an N-terminal amino acid, preferentially leucine, but not glutamic or aspartic acids.. Functionally, presumably involved in the processing and regular turnover of intracellular proteins. Catalyzes the removal of unsubstituted N-terminal amino acids from various peptides. This chain is Probable cytosol aminopeptidase, found in Chlamydia trachomatis serovar A (strain ATCC VR-571B / DSM 19440 / HAR-13).